Here is a 1545-residue protein sequence, read N- to C-terminus: ATP-binding cassette sub-family C member 2 (1545 aa).

Topologically, residues 1-27 (MLEKFCNSTFWNSSFLDSPEADLPLCF) are extracellular. N-linked (GlcNAc...) asparagine glycans are attached at residues N7 and N12. Residues 28–48 (EQTVLVWIPLGYLWLLAPWQL) form a helical membrane-spanning segment. Topologically, residues 49 to 68 (LHVYKSRTKRSSTTKLYLAK) are cytoplasmic. The helical transmembrane segment at 69–89 (QVFVGFLLILAAIELALVLTE) threads the bilayer. Topologically, residues 90–93 (DSGQ) are extracellular. A helical transmembrane segment spans residues 94-114 (ATVPAVRYTNPSLYLGTWLLV). At 115 to 126 (LLIQYSRQWCVQ) the chain is on the cytoplasmic side. Residues 127–147 (KNSWFLSLFWILSILCGTFQF) form a helical membrane-spanning segment. Residues 148–165 (QTLIRTLLQGDNSNLAYS) are Extracellular-facing. The chain crosses the membrane as a helical span at residues 166 to 186 (CLFFISYGFQILILIFSAFSE). Over 187-313 (NNESSNNPSS…DVPKSWLMKA (127 aa)) the chain is Cytoplasmic. The interval 253-284 (ARRALQRRQEKSSQQNSGARLPGLNKNQSQSQ) is disordered. A phosphoserine mark is found at S281 and S283. The chain crosses the membrane as a helical span at residues 314–334 (LFKTFYMVLLKSFLLKLVNDI). In terms of domain architecture, ABC transmembrane type-1 1 spans 322–605 (LLKSFLLKLV…LPMMISSMLQ (284 aa)). The Extracellular portion of the chain corresponds to 335-360 (FTFVSPQLLKLLISFASDRDTYLWIG). Residues 361-381 (YLCAILLFTAALIQSFCLQCY) traverse the membrane as a helical segment. Residues 382-437 (FQLCFKLGVKVRTAIMASVYKKALTLSNLARKEYTVGETVNLMSVDAQKLMDVTNF) lie on the Cytoplasmic side of the membrane. The helical transmembrane segment at 438 to 458 (MHMLWSSVLQIVLSIFFLWRE) threads the bilayer. Residues 459-461 (LGP) lie on the Extracellular side of the membrane. The chain crosses the membrane as a helical span at residues 462–482 (SVLAGVGVMVLVIPINAILST). At 483 to 544 (KSKTIQVKNM…NLLAFSQLQC (62 aa)) the chain is on the cytoplasmic side. Residues 545–565 (VVIFVFQLTPVLVSVVTFSVY) form a helical membrane-spanning segment. Residues 566–587 (VLVDSNNILDAQKAFTSITLFN) lie on the Extracellular side of the membrane. Residues 588-608 (ILRFPLSMLPMMISSMLQASV) form a helical membrane-spanning segment. At 609–971 (STERLEKYLG…VKFSIYLEYL (363 aa)) the chain is on the cytoplasmic side. An ABC transporter 1 domain is found at 637–861 (MQFSEASFTW…KGEFAKNLKT (225 aa)). 671–678 (GPVGSGKS) contacts ATP. Phosphoserine occurs at positions 878, 926, 930, and 938. Residues 972-992 (QAIGLFSIFFIILAFVMNSVA) traverse the membrane as a helical segment. One can recognise an ABC transmembrane type-1 2 domain in the interval 979–1264 (IFFIILAFVM…LVRMTSEIET (286 aa)). The Extracellular portion of the chain corresponds to 993–1033 (FIGSNLWLSAWTSDSKIFNSTDYPASQRDMRVGVYGALGLA). N-linked (GlcNAc...) asparagine glycosylation is present at N1011. A helical transmembrane segment spans residues 1034–1054 (QGIFVFIAHFWSAFGFVHASN). Over 1055–1097 (ILHKQLLNNILRAPMRFFDTTPTGRIVNRFAGDISTVDDTLPQ) the chain is Cytoplasmic. A helical membrane pass occupies residues 1098–1118 (SLRSWITCFLGIISTLVMICM). A topological domain (extracellular) is located at residue A1119. The chain crosses the membrane as a helical span at residues 1120 to 1140 (TPVFTIIVIPLGIIYVSVQMF). At 1141 to 1211 (YVSTSRQLRR…TSNRWLAIRL (71 aa)) the chain is on the cytoplasmic side. Residues 1212-1232 (ELVGNLTVFFSALMMVIYRDT) traverse the membrane as a helical segment. At 1233–1234 (LS) the chain is on the extracellular side. Residues 1235 to 1255 (GDTVGFVLSNALNITQTLNWL) traverse the membrane as a helical segment. At 1256-1545 (VRMTSEIETN…GIENVNSTKF (290 aa)) the chain is on the cytoplasmic side. The ABC transporter 2 domain occupies 1300-1534 (IQFNNYQVRY…PGPFYFMAKE (235 aa)). 1334 to 1341 (GRTGAGKS) provides a ligand contact to ATP. S1438 carries the phosphoserine modification.

The protein belongs to the ABC transporter superfamily. ABCC family. Conjugate transporter (TC 3.A.1.208) subfamily. Expressed by polarized cells in liver, kidney and intestine. The highest expression is found in liver. Expressed in small intestine.

It is found in the apical cell membrane. It carries out the reaction ATP + H2O + xenobioticSide 1 = ADP + phosphate + xenobioticSide 2.. The enzyme catalyses an S-substituted glutathione(in) + ATP + H2O = an S-substituted glutathione(out) + ADP + phosphate + H(+). It catalyses the reaction taurolithocholate 3-sulfate(in) + ATP + H2O = taurolithocholate 3-sulfate(out) + ADP + phosphate + H(+). The catalysed reaction is leukotriene C4(in) + ATP + H2O = leukotriene C4(out) + ADP + phosphate + H(+). It carries out the reaction 17beta-estradiol 17-O-(beta-D-glucuronate)(in) + ATP + H2O = 17beta-estradiol 17-O-(beta-D-glucuronate)(out) + ADP + phosphate + H(+). The enzyme catalyses (4Z,15Z)-bilirubin IXalpha C8-beta-D-glucuronoside(in) + ATP + H2O = (4Z,15Z)-bilirubin IXalpha C8-beta-D-glucuronoside(out) + ADP + phosphate + H(+). It catalyses the reaction (4Z,15Z)-bilirubin IXalpha C8,C12-beta-D-bisglucuronoside(in) + ATP + H2O = (4Z,15Z)-bilirubin IXalpha C8,C12-beta-D-bisglucuronoside(out) + ADP + phosphate + H(+). In terms of biological role, ATP-dependent transporter of the ATP-binding cassette (ABC) family that binds and hydrolyzes ATP to enable active transport of various substrates including many drugs, toxicants and endogenous compound across cell membranes. Transports a wide variety of conjugated organic anions such as sulfate-, glucuronide- and glutathione (GSH)-conjugates of endo- and xenobiotics substrates. Mediates hepatobiliary excretion of mono- and bis-glucuronidated bilirubin molecules and therefore play an important role in bilirubin detoxification. Also mediates hepatobiliary excretion of others glucuronide conjugates such as 17beta-estradiol 17-glucosiduronic acid and leukotriene C4. Transports sulfated bile salt such as taurolithocholate sulfate. Transports various anticancer drugs, such as anthracycline, vinca alkaloid and methotrexate and HIV-drugs such as protease inhibitors. Confers resistance to several anti-cancer drugs including cisplatin, doxorubicin, epirubicin, methotrexate, etoposide and vincristine. This is ATP-binding cassette sub-family C member 2 from Homo sapiens (Human).